We begin with the raw amino-acid sequence, 783 residues long: Probable phosphoketolase (783 aa).

It belongs to the XFP family. Requires thiamine diphosphate as cofactor.

The sequence is that of Probable phosphoketolase from Rhodopseudomonas palustris (strain ATCC BAA-98 / CGA009).